Reading from the N-terminus, the 1011-residue chain is Retinoblastoma-related protein (1011 aa).

A disordered region spans residues 1–22 (MSQASVDMEDVKPSISLPSDDG). The interval 411 to 612 (TPVSTAMTTA…ERGSSMYNSL (202 aa)) is domain A. The tract at residues 411–860 (TPVSTAMTTA…NEVFIPSVKP (450 aa)) is pocket. The tract at residues 613-729 (IVARPTLAAE…PAGGGETCAE (117 aa)) is spacer. Positions 730 to 860 (TGINIFFNKI…NEVFIPSVKP (131 aa)) are domain B. A disordered region spans residues 872-903 (QKSKSSPEDSNNADSQIPGSPRLSPFPNLPDM). Positions 873 to 889 (KSKSSPEDSNNADSQIP) are enriched in polar residues.

Belongs to the retinoblastoma protein (RB) family.

It localises to the nucleus. Its function is as follows. Regulator of biological processes that recruits a histone deacetylase to control gene transcription. May play a role in the entry into mitosis, negatively regulating the cell proliferation. Formation of stable complexes with geminiviridae replication-associated proteins may create a cellular environment which favors viral DNA replication. The chain is Retinoblastoma-related protein (Rb1) from Cocos nucifera (Coconut palm).